A 351-amino-acid chain; its full sequence is MAPVLPVVLPLQPRIRLAQGTWLLSWLLALAGGLTLLCSGHLLVQLWHLGTFLAPSCSFPALPQTALAAGAVALGTGLGGAGASRASLDAAQYPPWRGVLTPLLVVGTAAGGGLLTLGLGLALALPVSLHQGLEEGLQAALAHYKDTEVPGHCQAKRLMDELQLRYHCCGRHGYKDWFGVQWVSSRYLDPNDQDVVDRIQSNVEGLYLIDGVPFSCCNPHSPRPCLQSQLSDPYAHPLFDPRQPNLNLWAQGCHEVLVGHLQGLSGTLGSILAVTLLLQVLVLLGLRYLQTALEGLGGVIDGEGETQGYLLPGGLKDILQTAWLQGGLAHKPAPEEAPPDEEPPKEVLAEA.

At 1 to 19 the chain is on the cytoplasmic side; it reads MAPVLPVVLPLQPRIRLAQ. Residues 20–44 form a helical membrane-spanning segment; that stretch reads GTWLLSWLLALAGGLTLLCSGHLLV. Over 45–64 the chain is Lumenal; sequence QLWHLGTFLAPSCSFPALPQ. The chain crosses the membrane as a helical span at residues 65–84; it reads TALAAGAVALGTGLGGAGAS. At 85-102 the chain is on the cytoplasmic side; that stretch reads RASLDAAQYPPWRGVLTP. A helical membrane pass occupies residues 103 to 125; that stretch reads LLVVGTAAGGGLLTLGLGLALAL. Topologically, residues 126-263 are lumenal; the sequence is PVSLHQGLEE…HEVLVGHLQG (138 aa). Residues 264-286 form a helical membrane-spanning segment; it reads LSGTLGSILAVTLLLQVLVLLGL. The Cytoplasmic portion of the chain corresponds to 287–351; sequence RYLQTALEGL…EPPKEVLAEA (65 aa). Residues 329–351 are disordered; it reads AHKPAPEEAPPDEEPPKEVLAEA. Over residues 342-351 the composition is skewed to basic and acidic residues; the sequence is EPPKEVLAEA.

It belongs to the PRPH2/ROM1 family. As to quaternary structure, homodimer; disulfide-linked. Forms a homotetramer. Forms a heterotetramer with PRPH2. Homotetramer and heterotetramer core complexes go on to form higher order complexes by formation of intermolecular disulfide bonds. Interacts with STX3. Interacts with SNAP25.

It localises to the photoreceptor inner segment membrane. Its subcellular location is the photoreceptor outer segment membrane. In terms of biological role, plays a role in rod outer segment (ROS) morphogenesis. May play a role with PRPH2 in the maintenance of the structure of ROS curved disks. Plays a role in the organization of the ROS and maintenance of ROS disk diameter. Involved in the maintenance of the retina outer nuclear layer. This is Rod outer segment membrane protein 1 (Rom1) from Rattus norvegicus (Rat).